The primary structure comprises 751 residues: SKI family transcriptional corepressor 1 homolog-B (751 aa).

Disordered stretches follow at residues 1–30 (MESIPNQLPAGRDSSCSPNSKDLQSYSGPP), 234–267 (SRKRTLPIGRSESSPSQPPRGQTQGEPSDVPHKT), 386–434 (LDVS…GIPP), 459–569 (YGNR…HGNK), and 600–635 (QRETSVKDVHEEEPSSTVEEMEPKNHQDENNISEER). 2 stretches are compositionally biased toward polar residues: residues 14–27 (SSCSPNSKDLQSYS) and 244–259 (SESSPSQPPRGQTQGE). A compositionally biased stretch (basic and acidic residues) spans 416–428 (RNEEDKSGDESRS). The segment covering 479-491 (SESSSYRSVSPDV) has biased composition (low complexity). Residues 539–558 (QENTQMHTLNDLHSTNSSET) show a composition bias toward polar residues. 3 stretches are compositionally biased toward basic and acidic residues: residues 559-569 (RPSDMESHGNK), 603-612 (TSVKDVHEEE), and 620-635 (MEPKNHQDENNISEER). Residues 666-704 (SMAKEELQKQLVEQVELRKKLEREFQNLKDSFQDQMKRE) are a coiled coil.

Belongs to the SKI family.

Its subcellular location is the nucleus. Functionally, may inhibit BMP signaling. This Danio rerio (Zebrafish) protein is SKI family transcriptional corepressor 1 homolog-B (skor1b).